Here is a 704-residue protein sequence, read N- to C-terminus: Glycine--tRNA ligase beta subunit (704 aa).

Belongs to the class-II aminoacyl-tRNA synthetase family. Tetramer of two alpha and two beta subunits.

The protein resides in the cytoplasm. It carries out the reaction tRNA(Gly) + glycine + ATP = glycyl-tRNA(Gly) + AMP + diphosphate. The polypeptide is Glycine--tRNA ligase beta subunit (Rhizobium etli (strain ATCC 51251 / DSM 11541 / JCM 21823 / NBRC 15573 / CFN 42)).